A 169-amino-acid chain; its full sequence is Large ribosomal subunit protein bL19m (169 aa).

The transit peptide at Met-1 to Tyr-16 directs the protein to the mitochondrion.

This sequence belongs to the bacterial ribosomal protein bL19 family. As to quaternary structure, component of the mitochondrial large ribosomal subunit (mt-LSU). Mature yeast 74S mitochondrial ribosomes consist of a small (37S) and a large (54S) subunit. The 37S small subunit contains a 15S ribosomal RNA (15S mt-rRNA) and 34 different proteins. The 54S large subunit contains a 21S rRNA (21S mt-rRNA) and 46 different proteins.

The protein resides in the mitochondrion. Component of the mitochondrial ribosome (mitoribosome), a dedicated translation machinery responsible for the synthesis of mitochondrial genome-encoded proteins, including at least some of the essential transmembrane subunits of the mitochondrial respiratory chain. The mitoribosomes are attached to the mitochondrial inner membrane and translation products are cotranslationally integrated into the membrane. bL19m is essential for respiration. This is Large ribosomal subunit protein bL19m (IMG1) from Saccharomyces cerevisiae (strain ATCC 204508 / S288c) (Baker's yeast).